The primary structure comprises 393 residues: UDP-N-acetylglucosamine--N-acetylmuramyl-(pentapeptide) pyrophosphoryl-undecaprenol N-acetylglucosamine transferase (393 aa).

Residues 14–16, Asn128, Arg170, Ser210, and Gln321 each bind UDP-N-acetyl-alpha-D-glucosamine; that span reads TAG.

The protein belongs to the glycosyltransferase 28 family. MurG subfamily.

It localises to the cell membrane. It catalyses the reaction di-trans,octa-cis-undecaprenyl diphospho-N-acetyl-alpha-D-muramoyl-L-alanyl-D-glutamyl-meso-2,6-diaminopimeloyl-D-alanyl-D-alanine + UDP-N-acetyl-alpha-D-glucosamine = di-trans,octa-cis-undecaprenyl diphospho-[N-acetyl-alpha-D-glucosaminyl-(1-&gt;4)]-N-acetyl-alpha-D-muramoyl-L-alanyl-D-glutamyl-meso-2,6-diaminopimeloyl-D-alanyl-D-alanine + UDP + H(+). Its pathway is cell wall biogenesis; peptidoglycan biosynthesis. In terms of biological role, cell wall formation. Catalyzes the transfer of a GlcNAc subunit on undecaprenyl-pyrophosphoryl-MurNAc-pentapeptide (lipid intermediate I) to form undecaprenyl-pyrophosphoryl-MurNAc-(pentapeptide)GlcNAc (lipid intermediate II). The sequence is that of UDP-N-acetylglucosamine--N-acetylmuramyl-(pentapeptide) pyrophosphoryl-undecaprenol N-acetylglucosamine transferase from Bifidobacterium adolescentis (strain ATCC 15703 / DSM 20083 / NCTC 11814 / E194a).